The sequence spans 272 residues: Large ribosomal subunit protein uL2cz/uL2cy (272 aa).

Disordered regions lie at residues 1-33 (MAIHLYKTSTSSTRNGAVQVKSNPRNNLISGQR) and 220-272 (VMNP…RRSK). Ala2 bears the N-methylalanine mark. Polar residues predominate over residues 7 to 30 (KTSTSSTRNGAVQVKSNPRNNLIS).

Belongs to the universal ribosomal protein uL2 family. In terms of assembly, component of the chloroplast large ribosomal subunit (LSU). Mature 70S chloroplast ribosomes of higher plants consist of a small (30S) and a large (50S) subunit. The 30S small subunit contains 1 molecule of ribosomal RNA (16S rRNA) and 24 different proteins. The 50S large subunit contains 3 rRNA molecules (23S, 5S and 4.5S rRNA) and 33 different proteins.

The protein localises to the plastid. The protein resides in the chloroplast. In terms of biological role, component of the chloroplast ribosome (chloro-ribosome), a dedicated translation machinery responsible for the synthesis of chloroplast genome-encoded proteins, including proteins of the transcription and translation machinery and components of the photosynthetic apparatus. The polypeptide is Large ribosomal subunit protein uL2cz/uL2cy (rpl2-A) (Spinacia oleracea (Spinach)).